The chain runs to 267 residues: tRNA pseudouridine synthase A (267 aa).

D53 serves as the catalytic Nucleophile. Position 114 (Y114) interacts with substrate.

The protein belongs to the tRNA pseudouridine synthase TruA family. Homodimer.

It catalyses the reaction uridine(38/39/40) in tRNA = pseudouridine(38/39/40) in tRNA. Formation of pseudouridine at positions 38, 39 and 40 in the anticodon stem and loop of transfer RNAs. The chain is tRNA pseudouridine synthase A from Chlamydia trachomatis serovar A (strain ATCC VR-571B / DSM 19440 / HAR-13).